The sequence spans 302 residues: Recombination-associated protein RdgC (302 aa).

This sequence belongs to the RdgC family.

The protein resides in the cytoplasm. Its subcellular location is the nucleoid. In terms of biological role, may be involved in recombination. The polypeptide is Recombination-associated protein RdgC (Actinobacillus succinogenes (strain ATCC 55618 / DSM 22257 / CCUG 43843 / 130Z)).